The following is a 367-amino-acid chain: tRNA pseudouridine synthase D (367 aa).

The Nucleophile role is filled by Asp80. In terms of domain architecture, TRUD spans 156 to 316 (GIPNWFGEQR…LKQERRALRL (161 aa)).

The protein belongs to the pseudouridine synthase TruD family.

It carries out the reaction uridine(13) in tRNA = pseudouridine(13) in tRNA. Functionally, responsible for synthesis of pseudouridine from uracil-13 in transfer RNAs. The polypeptide is tRNA pseudouridine synthase D (Xanthomonas campestris pv. campestris (strain B100)).